A 354-amino-acid polypeptide reads, in one-letter code: MLYYFYSIFHINIFQYITVRAGIAFFFAFFLTLYLMPKFIRWAMKKSSYQPIYSLAPEHHKKKANTPTMGGVVFIFSALLASLLTVKIHNPYVLGGFLTILGFLAIGVIDDYGKITKRSNQSGLSAKQKFFLQILVAFVVSLFLYEYAHLNSNLYVPFYKYPLLDMKIFGILFWTLVIVATSNAVNLTDGLDGLATVPSIMALTTLAIITYITGNAVLSHYLLLPKIIGVGEVSIIAAAFAGSLIGFLWYNCHPAEVFMGDSGSLTLGAFIGYMAIISKSEVLLILIGFVFVMEALSVIIQVGSFKLRKKRVFLMAPIHHHFEQKNWNESKIIVRFWIIALISNLIALITLKIR.

The next 10 helical transmembrane spans lie at 16–36 (YITVRAGIAFFFAFFLTLYLM), 66–86 (TPTMGGVVFIFSALLASLLTV), 88–108 (IHNPYVLGGFLTILGFLAIGV), 130–150 (FFLQILVAFVVSLFLYEYAHL), 168–188 (IFGILFWTLVIVATSNAVNLT), 193–213 (GLATVPSIMALTTLAIITYIT), 227–247 (IIGVGEVSIIAAAFAGSLIGF), 257–277 (VFMGDSGSLTLGAFIGYMAII), 282–302 (VLLILIGFVFVMEALSVIIQV), and 331–351 (KIIVRFWIIALISNLIALITL).

It belongs to the glycosyltransferase 4 family. MraY subfamily. Mg(2+) is required as a cofactor.

It localises to the cell inner membrane. The catalysed reaction is UDP-N-acetyl-alpha-D-muramoyl-L-alanyl-gamma-D-glutamyl-meso-2,6-diaminopimeloyl-D-alanyl-D-alanine + di-trans,octa-cis-undecaprenyl phosphate = di-trans,octa-cis-undecaprenyl diphospho-N-acetyl-alpha-D-muramoyl-L-alanyl-D-glutamyl-meso-2,6-diaminopimeloyl-D-alanyl-D-alanine + UMP. Its pathway is cell wall biogenesis; peptidoglycan biosynthesis. Its function is as follows. Catalyzes the initial step of the lipid cycle reactions in the biosynthesis of the cell wall peptidoglycan: transfers peptidoglycan precursor phospho-MurNAc-pentapeptide from UDP-MurNAc-pentapeptide onto the lipid carrier undecaprenyl phosphate, yielding undecaprenyl-pyrophosphoryl-MurNAc-pentapeptide, known as lipid I. This is Phospho-N-acetylmuramoyl-pentapeptide-transferase from Nitratiruptor sp. (strain SB155-2).